The sequence spans 175 residues: Cytochrome c homolog (175 aa).

The Cytoplasmic portion of the chain corresponds to 1–8; the sequence is MTGKELNK. The helical; Signal-anchor transmembrane segment at 9-29 threads the bilayer; that stretch reads IVAAILFASLIAMIVGFIANI. Residues 30 to 175 lie on the Periplasmic side of the membrane; sequence LYKPNLHVLH…LFLKNYVHDQ (146 aa). Heme c contacts are provided by Cys84, Cys87, His88, and Met150.

Belongs to the cytochrome c family. Post-translationally, binds 1 heme c group covalently per subunit.

The protein localises to the cell membrane. Functionally, may be involved in electron transfer from bc1 complex to aa3. The sequence is that of Cytochrome c homolog (cycM) from Rickettsia prowazekii (strain Madrid E).